Here is a 257-residue protein sequence, read N- to C-terminus: Thioredoxin-dependent peroxide reductase, mitochondrial (257 aa).

A mitochondrion-targeting transit peptide spans Met1–His62. The 159-residue stretch at Pro64–Phe222 folds into the Thioredoxin domain. Lys84 bears the N6-succinyllysine mark. An N6-acetyllysine; alternate modification is found at Lys92. Position 92 is an N6-succinyllysine; alternate (Lys92). Catalysis depends on Cys109, which acts as the Cysteine sulfenic acid (-SOH) intermediate. A Phosphothreonine modification is found at Thr147.

Belongs to the peroxiredoxin family. AhpC/Prx1 subfamily. Homodimer; disulfide-linked, upon oxidation. 6 homodimers assemble to form a ring-like dodecamer. Interacts with NEK6. Interacts with LRRK2. Interacts with MAP3K13. Interacts with RPS6KC1 (via PX domain). In terms of processing, phosphorylated by LRRK2; phosphorylation reduces perodixase activity. The enzyme can be inactivated by further oxidation of the cysteine sulfenic acid (C(P)-SOH) to sulphinic acid (C(P)-SO2H) and sulphonic acid (C(P)-SO3H) instead of its condensation to a disulfide bond. Post-translationally, S-palmitoylated. In terms of tissue distribution, predominantly expressed in adrenal cortex. Also detected in liver, renal cortex and medulla, and adrenal medulla (at protein level).

The protein resides in the mitochondrion matrix. Its subcellular location is the cytoplasm. It is found in the early endosome. The enzyme catalyses a hydroperoxide + [thioredoxin]-dithiol = an alcohol + [thioredoxin]-disulfide + H2O. Thiol-specific peroxidase that catalyzes the reduction of hydrogen peroxide and organic hydroperoxides to water and alcohols, respectively. Plays a role in cell protection against oxidative stress by detoxifying peroxides. Acts synergistically with MAP3K13 to regulate the activation of NF-kappa-B in the cytosol. Required for the maintenance of physical strength. In Bos taurus (Bovine), this protein is Thioredoxin-dependent peroxide reductase, mitochondrial (PRDX3).